The following is a 1111-amino-acid chain: ATP-dependent DNA helicase mph1 (1111 aa).

2 stretches are compositionally biased toward acidic residues: residues 1–18 and 47–65; these read MSVS…EIDD and VFDE…DEFQ. Disordered stretches follow at residues 1–81, 101–144, 210–240, and 259–280; these read MSVS…EDVE, FVTQ…HQPD, AFDS…RTNR, and IPSQ…PTHH. Polar residues-rich tracts occupy residues 132 to 143 and 215 to 238; these read PTTTTVDASHQP and LSLS…QFRT. Residues 306-474 enclose the Helicase ATP-binding domain; it reads IAQRGLFHNL…AVIDGLGIAK (169 aa). ATP is bound at residue 319 to 326; the sequence is LPTGLGKT. Positions 422–425 match the DEAH box motif; that stretch reads DEAH. The region spanning 644-818 is the Helicase C-terminal domain; sequence YLKQVVLNHF…GTRFTFHDDT (175 aa). Disordered regions lie at residues 836-898, 998-1047, and 1092-1111; these read IDIP…RKPT, SVLS…CTPE, and AERH…DTEE. Basic residues predominate over residues 852–864; it reads KRARPPKRPPKKF.

Belongs to the DEAD box helicase family. DEAH subfamily. FANCM sub-subfamily. Interacts with the MHF histone-fold complex to form the FANCM-MHF complex.

It localises to the nucleus. It catalyses the reaction ATP + H2O = ADP + phosphate + H(+). ATP-dependent DNA helicase involved in DNA damage repair by homologous recombination and in genome maintenance. Capable of unwinding D-loops. Plays a role in limiting crossover recombinants during mitotic DNA double-strand break (DSB) repair. Component of a FANCM-MHF complex which promotes gene conversion at blocked replication forks, probably by reversal of the stalled fork. This Neosartorya fischeri (strain ATCC 1020 / DSM 3700 / CBS 544.65 / FGSC A1164 / JCM 1740 / NRRL 181 / WB 181) (Aspergillus fischerianus) protein is ATP-dependent DNA helicase mph1.